The sequence spans 2024 residues: Pericentriolar material 1 protein (2024 aa).

The disordered stretch occupies residues 1–92 (MATGGGPFED…FPHSRYMSQM (92 aa)). N-acetylalanine is present on Ala-2. Residues 2–1460 (ATGGGPFEDG…TWIASNSELT (1459 aa)) form a mediates interaction with DZIP1 region. Residues 43–61 (RSSEKNKKKFGVESDKRVT) show a composition bias toward basic and acidic residues. 7 positions are modified to phosphoserine: Ser-65, Ser-68, Ser-69, Ser-93, Ser-110, Ser-116, and Ser-119. A disordered region spans residues 111–163 (DLDQRSIGSDSQGRATAANNKRQLSENRKPFNFLPMQINTNKSKDASTNPPNR). 2 stretches are compositionally biased toward polar residues: residues 116 to 132 (SIGS…NNKR) and 147 to 163 (QINT…PPNR). The residue at position 159 (Asn-159) is a Phosphoserine; in variant Ser-159. Residues 218 to 301 (KASSMREDLV…QLRALQGRQA (84 aa)) are a coiled coil. Residues 354–392 (RDSQPPAVPDNRRQAESLSLTREVSQSRKPSASERLPDE) are disordered. The span at 369 to 383 (ESLSLTREVSQSRKP) shows a compositional bias: polar residues. Ser-370 is subject to Phosphoserine. At Ser-372 the chain carries Phosphoserine; by PLK4. Ser-384 bears the Phosphoserine mark. Lys-399 carries the post-translational modification N6-acetyllysine. Residues 400 to 424 (MRVLQEKKQKMDKLLGELHTLRDQH) are a coiled coil. 2 disordered regions span residues 421-492 (RDQH…KLQK) and 523-548 (ENRK…VTNI). Polar residues-rich tracts occupy residues 425–445 (LNNS…SAPS) and 456–477 (GESN…SQNE). The stretch at 487–543 (SEKLQKLNEVRKRLNELRELVHYYEQTSDMMTDAVNENRKDEETEESEYDSEHENSE) forms a coiled coil. Ser-588 is modified (phosphoserine). 2 disordered regions span residues 614–652 (HVAQ…HPED) and 699–726 (FYPA…DTGV). The segment covering 618 to 632 (GEDDEEEEEEAEEEG) has biased composition (acidic residues). Over residues 634–643 (SGASLSSHRS) the composition is skewed to low complexity. Phosphoserine is present on Ser-643. Residues 651-682 (EDAEFEQKINRLMAAKQKLRQLQDLVAMVQDD) adopt a coiled-coil conformation. The segment covering 708–719 (QNSNNTRGNANK) has biased composition (polar residues). Coiled coils occupy residues 726-769 (VNEK…LQTA) and 824-858 (SEMR…GLAE). Thr-859 carries the phosphothreonine modification. Phosphoserine is present on residues Ser-861, Ser-866, Ser-869, and Ser-872. Thr-877 bears the Phosphothreonine mark. The disordered stretch occupies residues 915-947 (TDEEEEEEQDASSNDNFSVCPSNSVNHNSYNGK). Residues 925–946 (ASSNDNFSVCPSNSVNHNSYNG) show a composition bias toward polar residues. Phosphoserine is present on residues Ser-960, Ser-977, Ser-988, and Ser-991. A coiled-coil region spans residues 1063-1089 (TQLTWQQNNVQRLKQMLNELMRQQNQH). Disordered stretches follow at residues 1085–1109 (QQNQ…PSPS) and 1152–1211 (FSQN…RTPW). The segment covering 1089 to 1099 (HPEKPGGKERG) has biased composition (basic and acidic residues). The span at 1152–1173 (FSQNISTPSEQQQPLAQNSSGK) shows a compositional bias: polar residues. Ser-1185 and Ser-1188 each carry phosphoserine. Over residues 1192 to 1201 (EKPRNKKLPE) the composition is skewed to basic and acidic residues. Phosphoserine occurs at positions 1229 and 1231. Over residues 1232–1246 (VEKSTSSNRKNQLDT) the composition is skewed to polar residues. The disordered stretch occupies residues 1232–1342 (VEKSTSSNRK…RHSAQTEEPV (111 aa)). 4 positions are modified to phosphoserine: Ser-1257, Ser-1260, Ser-1262, and Ser-1263. The segment at 1279–1799 (TRKASAQASL…TQALTNYGSG (521 aa)) is interaction with HAP1. A compositionally biased stretch (basic residues) spans 1296–1313 (KSKSKKRNSTQLKSRVKN). Phosphoserine occurs at positions 1318 and 1320. At Thr-1468 the chain carries Phosphothreonine. Residues 1515 to 1539 (IHLDQALARMREYERMKTEAESNSN) adopt a coiled-coil conformation. A phosphoserine mark is found at Ser-1573, Ser-1697, Ser-1730, Ser-1765, Ser-1768, Ser-1776, and Ser-1782. Disordered stretches follow at residues 1725–1868 (LEDH…NNCP) and 1880–1944 (EQPL…PVLV). A compositionally biased stretch (acidic residues) spans 1768–1777 (SDQEEDEESE). Over residues 1783-1797 (INLSKAETQALTNYG) the composition is skewed to polar residues. The span at 1799 to 1815 (GEDENEDEEMEEFEEGP) shows a compositional bias: acidic residues. Positions 1818 to 1827 (VQTSLQANTE) are enriched in polar residues. Over residues 1835–1860 (DEQVLQRDFKKTAESKNVPLEREATS) the composition is skewed to basic and acidic residues. Positions 1905-1916 (PLRLPEMEPLVP) are enriched in low complexity. The interval 1913-2024 (PLVPRVKEVK…EPETVGAQSI (112 aa)) is interaction with BBS4. Over residues 1924–1933 (AQETPESSLA) the composition is skewed to polar residues. 2 positions are modified to phosphoserine: Ser-1958 and Ser-1977. The disordered stretch occupies residues 2005 to 2024 (ELAGNSETLKEPETVGAQSI).

It belongs to the PCM1 family. Self-associates. Interacts with C2CD3. Interacts with BBS4, BBS8, CETN3, HAP1, NDE1, NDEL1, MAP1LC3B, GABARAPAL2, and GABARAP. Interacts with CEP131; the interaction increases in response to ultraviolet light (UV) radiation. Associates with microtubule; association to microtubule is reduced in response to cellular stress, such as ultraviolet light (UV) radiation or heat shock, in a process that requires p38 MAP kinase signaling. Interacts with CFAP263. Interacts with SSX2IP. Interacts with CCDC13. Interacts with CEP290. Interacts with PARD6A. Interacts with KIAA0753/OFIP, CEP20/FOR20 and OFD1; the interaction with CEP20/FOR20 and OFD1 may be mediated by KIAA0753/OFIP. Interacts with CCDC66. Interacts with CCDC61. Interacts with DZIP1; localizes DZIP1 and the associated BBSome to centriolar satellite. Interacts with CSTPP1, TTLL1, TPGS1 and LRRC49. Interacts with CFAP53. In terms of processing, ubiquitinated. Undergoes monoubiquitination catalyzed by the E3 ubiquitin-protein ligase MIB1 in proliferating cells, preventing cilia formation. Monoubiquitination by MIB1 is inhibited in response to cellular stress, such as ultraviolet light (UV) radiation or heat shock, resulting in cilia formation initiation. Post-translationally, variant Ser-159 is phosphorylated. Phosphorylated on multiple serine and threonine residues by DYRK3 during the G2-to-M transition, after the nuclear-envelope breakdown. Phosphorylation by DYRK3 promotes disassembly of pericentriolar material. Phosphorylation at Ser-372 mediated by PLK4 is required to maintain the integrity of centriolar satellites. As to expression, expressed in blood, bone marrow, breast, lymph node, ovary and thyroid.

The protein resides in the cytoplasm. It localises to the cytoskeleton. The protein localises to the microtubule organizing center. Its subcellular location is the centrosome. It is found in the cytoplasmic granule. The protein resides in the centriolar satellite. It localises to the cilium basal body. Required for centrosome assembly and function. Essential for the correct localization of several centrosomal proteins including CEP250, CETN3, PCNT and NEK2. Required to anchor microtubules to the centrosome. Also involved in cilium biogenesis by recruiting the BBSome, a ciliary protein complex involved in cilium biogenesis, to the centriolar satellites. Recruits the tubulin polyglutamylase complex (TPGC) to centriolar satellites. This is Pericentriolar material 1 protein from Homo sapiens (Human).